Consider the following 339-residue polypeptide: DNA-directed RNA polymerase subunit alpha (339 aa).

The tract at residues 1 to 233 (MVREEVAGST…DLFLPFLHAE (233 aa)) is alpha N-terminal domain (alpha-NTD). Residues 264-339 (KKGIPLNCIF…IDLLKNKLSF (76 aa)) form an alpha C-terminal domain (alpha-CTD) region.

Belongs to the RNA polymerase alpha chain family. In terms of assembly, in plastids the minimal PEP RNA polymerase catalytic core is composed of four subunits: alpha, beta, beta', and beta''. When a (nuclear-encoded) sigma factor is associated with the core the holoenzyme is formed, which can initiate transcription.

The protein resides in the plastid. Its subcellular location is the chloroplast. It catalyses the reaction RNA(n) + a ribonucleoside 5'-triphosphate = RNA(n+1) + diphosphate. DNA-dependent RNA polymerase catalyzes the transcription of DNA into RNA using the four ribonucleoside triphosphates as substrates. This Psathyrostachys fragilis (Russian wild rye) protein is DNA-directed RNA polymerase subunit alpha.